The primary structure comprises 155 residues: uncharacterized protein (155 aa).

A mitochondrion-targeting transit peptide spans 1–17; the sequence is MMRGASKRSISSAAVLL. The disordered stretch occupies residues 111–155; it reads WHRQQKRSQRRRSVAKYEQREEAARVEKEEREARDREMVRELFRR. A compositionally biased stretch (basic residues) spans 113–124; the sequence is RQQKRSQRRRSV. A compositionally biased stretch (basic and acidic residues) spans 125–155; that stretch reads AKYEQREEAARVEKEEREARDREMVRELFRR.

It belongs to the prokaryotic/mitochondrial release factor family.

Its subcellular location is the mitochondrion. This is an uncharacterized protein from Saccharomyces cerevisiae (strain ATCC 204508 / S288c) (Baker's yeast).